Consider the following 535-residue polypeptide: UDP-glucuronosyltransferase 1A1 (535 aa).

The N-terminal stretch at 1–29 (MTVVCWSSRLLLLLPYLLLCVFGPSASHA) is a signal peptide. 3 N-linked (GlcNAc...) asparagine glycosylation sites follow: Asn89, Asn297, and Asn435. The chain crosses the membrane as a helical span at residues 493–509 (VIGFLLAIVLTVVFIVF).

Belongs to the UDP-glycosyltransferase family. In terms of assembly, homodimers. Homooligomer. Interacts with UGT1A3, UGT1A4, UGT1A6, UGT1A7, UGT1A8, UGT1A9 and UGT1A10 to form heterodimers. As to expression, highly expressed in liver and at lower levels in colon, kidney, stomach and intestine.

It is found in the endoplasmic reticulum membrane. The catalysed reaction is glucuronate acceptor + UDP-alpha-D-glucuronate = acceptor beta-D-glucuronoside + UDP + H(+). The enzyme catalyses 17beta-estradiol + UDP-alpha-D-glucuronate = 17beta-estradiol 3-O-(beta-D-glucuronate) + UDP + H(+). It carries out the reaction 2-hydroxyestrone + UDP-alpha-D-glucuronate = 2-hydroxyestrone 3-O-(beta-D-glucuronate) + UDP + H(+). It catalyses the reaction 2-hydroxy-17beta-estradiol + UDP-alpha-D-glucuronate = 2-hydroxy-17beta-estradiol 3-O-(beta-D-glucuronate) + UDP + H(+). The catalysed reaction is 2-methoxy-17beta-estradiol + UDP-alpha-D-glucuronate = 2-methoxy-17beta-estradiol 3-O-(beta-D-glucuronate) + UDP + H(+). The enzyme catalyses 17alpha-estradiol + UDP-alpha-D-glucuronate = 17alpha-estradiol 3-O-(beta-D-glucuronate) + UDP + H(+). It carries out the reaction 16beta,17beta-estriol + UDP-alpha-D-glucuronate = 16beta,17beta-estriol 16-O-(beta-D-glucuronate) + UDP + H(+). It catalyses the reaction losartan + UDP-alpha-D-glucuronate = losartan-2-N-beta-D-glucuronide + UDP. The catalysed reaction is prunetin + UDP-alpha-D-glucuronate = prunetin-4'-O-beta-D-glucuronide + UDP. The enzyme catalyses SN-38 + UDP-alpha-D-glucuronate = SN-38 O-beta-D-glucuronide + UDP + H(+). It carries out the reaction (4Z,15Z)-bilirubin IXalpha + UDP-alpha-D-glucuronate = (4Z,15Z)-bilirubin IXalpha C12-beta-D-glucuronoside + UDP. It catalyses the reaction (4Z,15Z)-bilirubin IXalpha + UDP-alpha-D-glucuronate = (4Z,15Z)-bilirubin IXalpha C8-beta-D-glucuronoside + UDP. The catalysed reaction is (4Z,15Z)-bilirubin IXalpha C8-beta-D-glucuronoside + UDP-alpha-D-glucuronate = (4Z,15Z)-bilirubin IXalpha C8,C12-beta-D-bisglucuronoside + UDP. The enzyme catalyses (4Z,15Z)-bilirubin IXalpha C12-beta-D-glucuronoside + UDP-alpha-D-glucuronate = (4Z,15Z)-bilirubin IXalpha C8,C12-beta-D-bisglucuronoside + UDP. It carries out the reaction 8-iso-prostaglandin F2alpha + UDP-alpha-D-glucuronate = 8-iso-prostaglandin F2alpha-glucuronide + UDP + H(+). It catalyses the reaction (5Z,8Z,11Z,14Z)-eicosatetraenoate + UDP-alpha-D-glucuronate = O-[(5Z),(8Z),(11Z),(14Z)-eicosatetraenoyl]-beta-D-glucuronate + UDP. The catalysed reaction is 15-hydroxy-(5Z,8Z,11Z,13E)-eicosatetraenoate + UDP-alpha-D-glucuronate = 15-O-(beta-D-glucuronosyl)-(5Z,8Z,11Z,14Z)-eicosatetraenoate + UDP + H(+). The enzyme catalyses 20-hydroxy-(5Z,8Z,11Z,14Z)-eicosatetraenoate + UDP-alpha-D-glucuronate = 20-O-(beta-D-glucuronosyl)-(5Z,8Z,11Z,14Z)-eicosatetraenoate + UDP + H(+). It carries out the reaction prostaglandin B1 + UDP-alpha-D-glucuronate = 15-O-(beta-D-glucuronosyl)-prostaglandin B1 + UDP + H(+). It catalyses the reaction (E)-ferulate + UDP-alpha-D-glucuronate = (E)-4-O-(beta-D-glucuronosyl)-ferulate + UDP + H(+). The catalysed reaction is (E)-ferulate + UDP-alpha-D-glucuronate = (E)-ferulic acid beta-D-glucuronate ester + UDP. In terms of biological role, UDP-glucuronosyltransferase (UGT) that catalyzes phase II biotransformation reactions in which lipophilic substrates are conjugated with glucuronic acid to increase the metabolite's water solubility, thereby facilitating excretion into either the urine or bile. Essential for the elimination and detoxification of drugs, xenobiotics and endogenous compounds. Catalyzes the glucuronidation of endogenous estrogen hormones such as estradiol, estrone and estriol. Involved in the glucuronidation of bilirubin, a degradation product occurring in the normal catabolic pathway that breaks down heme in vertebrates. Involved in the glucuronidation of arachidonic acid (AA) and AA-derived eicosanoids including 15-HETE, 20-HETE, PGB1 and F2-isoprostane (8-iso-PGF2alpha). Involved in the glucuronidation of the phytochemical ferulic acid at the phenolic or the carboxylic acid group. Also catalyzes the glucuronidation the isoflavones genistein, daidzein, glycitein, formononetin, biochanin A and prunetin, which are phytoestrogens with anticancer and cardiovascular properties. Involved in the glucuronidation of the AGTR1 angiotensin receptor antagonist losartan, a drug which can inhibit the effect of angiotensin II. Involved in the biotransformation of 7-ethyl-10-hydroxycamptothecin (SN-38), the pharmacologically active metabolite of the anticancer drug irinotecan. This chain is UDP-glucuronosyltransferase 1A1, found in Mus musculus (Mouse).